A 396-amino-acid polypeptide reads, in one-letter code: ATP-dependent RNA helicase eIF4A (396 aa).

Residues 23 to 51 (YEFDDMNLNEKLLRGVFGYGFNKPSAIQQ) carry the Q motif motif. One can recognise a Helicase ATP-binding domain in the interval 54 to 223 (IMPIIEGNDV…AKFMQNPVRI (170 aa)). Position 67 to 74 (67 to 74 (AQSGTGKT)) interacts with ATP. Positions 171 to 174 (DEAD) match the DEAD box motif. Positions 234 to 395 (GIKQFYVNVE…ELPSDIGTLF (162 aa)) constitute a Helicase C-terminal domain.

The protein belongs to the DEAD box helicase family. eIF4A subfamily. As to quaternary structure, component of the eIF4F complex, which composition varies with external and internal environmental conditions. It is composed of at least eIF4A, eIF4E and eIF4G.

The protein localises to the cytoplasm. It carries out the reaction ATP + H2O = ADP + phosphate + H(+). ATP-dependent RNA helicase which is a subunit of the eIF4F complex involved in cap recognition and is required for mRNA binding to ribosome. In the current model of translation initiation, eIF4A unwinds RNA secondary structures in the 5'-UTR of mRNAs which is necessary to allow efficient binding of the small ribosomal subunit, and subsequent scanning for the initiator codon. This Candida glabrata (strain ATCC 2001 / BCRC 20586 / JCM 3761 / NBRC 0622 / NRRL Y-65 / CBS 138) (Yeast) protein is ATP-dependent RNA helicase eIF4A (TIF1).